The sequence spans 212 residues: ER lumen protein-retaining receptor 1 (212 aa).

Topologically, residues 1-4 (MNLF) are lumenal. A helical transmembrane segment spans residues 5 to 24 (RFLGDLSHLLAIILLLLKIW). At 25-32 (KSRSCAGI) the chain is on the cytoplasmic side. Residues 33 to 52 (SGKSQVLFAVVFTARYLDLF) form a helical membrane-spanning segment. An interaction with the K-D-E-L motif on target proteins region spans residues 47–48 (RY). Residues 53–58 (TNYISL) lie on the Lumenal side of the membrane. The helical transmembrane segment at 59–79 (YNTCMKVVYIACSFTTVWLIY) threads the bilayer. Over 80–92 (SKFKATYDGNHDT) the chain is Cytoplasmic. Residues 93–110 (FRVEFLVVPTAILAFLVN) traverse the membrane as a helical segment. Residues 111 to 116 (HDFTPL) are Lumenal-facing. The helical transmembrane segment at 117–135 (EILWTFSIYLESVAILPQL) threads the bilayer. Topologically, residues 136-149 (FMVSKTGEAETITS) are cytoplasmic. A helical membrane pass occupies residues 150–168 (HYLFALGVYRTLYLFNWIW). The interval 159–169 (RTLYLFNWIWR) is interaction with the K-D-E-L motif on target proteins. Topologically, residues 169–178 (RYHFEGFFDL) are lumenal. The helical transmembrane segment at 179–199 (IAIVAGLVQTVLYCDFFYLYI) threads the bilayer. Topologically, residues 200 to 212 (TKVLKGKKLSLPA) are cytoplasmic. Positions 204–207 (KGKK) are important for recycling of cargo proteins with the sequence motif K-D-E-L from the Golgi to the endoplasmic reticulum. Serine 209 bears the Phosphoserine; by PKA mark.

Belongs to the ERD2 family. In terms of assembly, upon ligand binding the receptor oligomerizes and interacts with components of the transport machinery such as ARFGAP1 and ARF1. In terms of processing, phosphorylation by PKA at Ser-209 is required for endoplasmic reticulum retention function.

Its subcellular location is the golgi apparatus membrane. The protein resides in the cytoplasmic vesicle. It localises to the COPI-coated vesicle membrane. It is found in the endoplasmic reticulum membrane. The protein localises to the endoplasmic reticulum-Golgi intermediate compartment membrane. Its function is as follows. Receptor for the C-terminal sequence motif K-D-E-L that is present on endoplasmic reticulum resident proteins and that mediates their recycling from the Golgi back to the endoplasmic reticulum. The chain is ER lumen protein-retaining receptor 1 (KDELR1) from Homo sapiens (Human).